Here is a 441-residue protein sequence, read N- to C-terminus: Ribulose bisphosphate carboxylase (441 aa).

Lysine 160 (proton acceptor) is an active-site residue. A substrate-binding site is contributed by lysine 162. 3 residues coordinate Mg(2+): lysine 186, aspartate 188, and glutamate 189. Lysine 186 bears the N6-carboxylysine mark. The active-site Proton acceptor is histidine 278. Substrate is bound by residues arginine 279, histidine 311, 364–366 (SGG), and 386–389 (QVGG).

This sequence belongs to the RuBisCO large chain family. Type III subfamily. In terms of assembly, homodimer. In contrast to form I RuBisCO, the form III RuBisCO is composed solely of large subunits. Requires Mg(2+) as cofactor.

It carries out the reaction 2 (2R)-3-phosphoglycerate + 2 H(+) = D-ribulose 1,5-bisphosphate + CO2 + H2O. The enzyme catalyses D-ribulose 1,5-bisphosphate + O2 = 2-phosphoglycolate + (2R)-3-phosphoglycerate + 2 H(+). Reversibly inhibited by O(2). Catalyzes the addition of molecular CO(2) and H(2)O to ribulose 1,5-bisphosphate (RuBP), generating two molecules of 3-phosphoglycerate (3-PGA). Functions in an archaeal AMP degradation pathway, together with AMP phosphorylase and R15P isomerase. The protein is Ribulose bisphosphate carboxylase of Archaeoglobus fulgidus (strain ATCC 49558 / DSM 4304 / JCM 9628 / NBRC 100126 / VC-16).